Here is a 268-residue protein sequence, read N- to C-terminus: Large ribosomal subunit protein bL9m (268 aa).

Residues 1–52 (MAAAAFAVPRGVQLRVLTERLLRGGVRELLRPRLSGSTPGSERDFSLSHSRG) constitute a mitochondrion transit peptide.

This sequence belongs to the bacterial ribosomal protein bL9 family. Component of the mitochondrial ribosome large subunit (39S) which comprises a 16S rRNA and about 50 distinct proteins.

It is found in the mitochondrion. The protein is Large ribosomal subunit protein bL9m (MRPL9) of Bos taurus (Bovine).